Consider the following 159-residue polypeptide: Putative RING-H2 finger protein ATL69 (159 aa).

A helical membrane pass occupies residues 13-33 (LGYGIAIAVSILVLISFIMLA). The RING-type; atypical zinc-finger motif lies at 94–136 (CSICLCDYEAREPVRCIPECNHCFHTDCVDEWLRTSATCPLCR).

It belongs to the RING-type zinc finger family. ATL subfamily.

It is found in the membrane. It carries out the reaction S-ubiquitinyl-[E2 ubiquitin-conjugating enzyme]-L-cysteine + [acceptor protein]-L-lysine = [E2 ubiquitin-conjugating enzyme]-L-cysteine + N(6)-ubiquitinyl-[acceptor protein]-L-lysine.. The protein operates within protein modification; protein ubiquitination. This Arabidopsis thaliana (Mouse-ear cress) protein is Putative RING-H2 finger protein ATL69 (ATL69).